The sequence spans 529 residues: Peptide chain release factor 3 (529 aa).

In terms of domain architecture, tr-type G spans 11–280; it reads ARRRTFAIIS…GLVEWAPSPM (270 aa). GTP is bound by residues 20–27, 88–92, and 142–145; these read SHPDAGKT, DTPGH, and NKLD.

The protein belongs to the TRAFAC class translation factor GTPase superfamily. Classic translation factor GTPase family. PrfC subfamily.

The protein localises to the cytoplasm. Its function is as follows. Increases the formation of ribosomal termination complexes and stimulates activities of RF-1 and RF-2. It binds guanine nucleotides and has strong preference for UGA stop codons. It may interact directly with the ribosome. The stimulation of RF-1 and RF-2 is significantly reduced by GTP and GDP, but not by GMP. This Erwinia tasmaniensis (strain DSM 17950 / CFBP 7177 / CIP 109463 / NCPPB 4357 / Et1/99) protein is Peptide chain release factor 3.